The chain runs to 162 residues: NADH-quinone oxidoreductase subunit C (162 aa).

It belongs to the complex I 30 kDa subunit family. In terms of assembly, NDH-1 is composed of 14 different subunits. Subunits NuoB, C, D, E, F, and G constitute the peripheral sector of the complex.

The protein localises to the cell inner membrane. It catalyses the reaction a quinone + NADH + 5 H(+)(in) = a quinol + NAD(+) + 4 H(+)(out). Its function is as follows. NDH-1 shuttles electrons from NADH, via FMN and iron-sulfur (Fe-S) centers, to quinones in the respiratory chain. The immediate electron acceptor for the enzyme in this species is believed to be ubiquinone. Couples the redox reaction to proton translocation (for every two electrons transferred, four hydrogen ions are translocated across the cytoplasmic membrane), and thus conserves the redox energy in a proton gradient. This is NADH-quinone oxidoreductase subunit C from Geobacter metallireducens (strain ATCC 53774 / DSM 7210 / GS-15).